The following is a 756-amino-acid chain: Ribosomal RNA large subunit methyltransferase K/L (756 aa).

Positions 46–157 (TAYRLCLWSR…RGEAILSLDL (112 aa)) constitute a THUMP domain. Over residues 395-409 (ERRTPEQRQAEREQA) the composition is skewed to basic and acidic residues. Residues 395–441 (ERRTPEQRQAEREQAAYDQTPNEPQERKFNKNGNPIKPTPAPAPVIE) are disordered.

Belongs to the methyltransferase superfamily. RlmKL family.

Its subcellular location is the cytoplasm. It catalyses the reaction guanosine(2445) in 23S rRNA + S-adenosyl-L-methionine = N(2)-methylguanosine(2445) in 23S rRNA + S-adenosyl-L-homocysteine + H(+). The catalysed reaction is guanosine(2069) in 23S rRNA + S-adenosyl-L-methionine = N(2)-methylguanosine(2069) in 23S rRNA + S-adenosyl-L-homocysteine + H(+). Functionally, specifically methylates the guanine in position 2445 (m2G2445) and the guanine in position 2069 (m7G2069) of 23S rRNA. This Pseudomonas fluorescens (strain Pf0-1) protein is Ribosomal RNA large subunit methyltransferase K/L.